Reading from the N-terminus, the 190-residue chain is Cytoplasmic envelopment protein 3 (190 aa).

A lipid anchor (N-myristoyl glycine; by host) is attached at Gly-2. Positions 14–190 (GTTSGEPLKD…TKKPAASLPF (177 aa)) are disordered. Positions 30–43 (SLRSYDNIPPTSSS) are enriched in polar residues. Residues 44–58 (DEGEDDDDGEDDDNE) are compositionally biased toward acidic residues. Positions 80–90 (SHREATHDGPK) are enriched in basic and acidic residues. Positions 108–123 (KQSKKKKKPSKHHHHQ) are enriched in basic residues. Residues 130–139 (ETDDLDEEDT) show a composition bias toward acidic residues.

This sequence belongs to the herpesviridae cytoplasmic envelopment protein 3 family. Interacts with cytoplasmic envelopment protein 2; this interaction is essential for the proper localization of each protein to the assembly complex and thus for the production of infectious virus. In terms of processing, myristoylation and palmitoylation (probably on one or more of the nearby cysteines at the N-terminus) enable membrane-binding and Golgi apparatus-specific targeting and are essential for efficient packaging. Phosphorylated. Phosphorylation does not seem to be required for recycling to the host Golgi apparatus. Packaging is selective for underphosphorylated forms.

The protein resides in the virion tegument. The protein localises to the virion membrane. Its subcellular location is the host cell membrane. It is found in the host Golgi apparatus membrane. Functionally, plays an important role in the cytoplasmic envelopment of tegument proteins and capsids during the assembly and egress processes. Also participates in viral entry at the fusion step probably by regulating the core fusion machinery. This is Cytoplasmic envelopment protein 3 (UL99) from Human cytomegalovirus (strain Merlin) (HHV-5).